The primary structure comprises 583 residues: uncharacterized protein (583 aa).

The FAD-binding FR-type domain maps to 162-424; that stretch reads YGIFAAPILD…RGVQQNPFAK (263 aa).

The protein belongs to the flavoprotein pyridine nucleotide cytochrome reductase family. The cofactor is FAD.

Its subcellular location is the mitochondrion. This is an uncharacterized protein from Schizosaccharomyces pombe (strain 972 / ATCC 24843) (Fission yeast).